The primary structure comprises 342 residues: MDSINKIINFLFPLLTLYALLVFYPTYQRLKSAVSICRNLFSENVAGKVVVITGAASGIGEALAYEYGKRGAYLALVDIRGEPLFHVAALAELYGSPEVLPLVADVSKLQDCERFIRATVLHFGRLDHLVTNAGVAPLYFFADIEDVSKASPAMDINFWGSVYCTFFASPYLKKFRGRIVVIASGCGYIASPRLSFYCASKAAVIAFYETLRTEFGSDIGVTIVAPGIVDSEMSRGKFMTKDGKLVVDKELRDVQMSVLPVESAERCAKAIMRSVCRGDRYLLEPDWIGCVILLKVFCSEATEWVARWLLIARPKFPMMEALSNKILDVAHAFNSFFSFPHY.

A helical; Signal-anchor for type II membrane protein transmembrane segment spans residues 10–30 (FLFPLLTLYALLVFYPTYQRL). NADP(+) contacts are provided by residues 54 to 80 (GAASGIGEALAYEYGKRGAYLALVDIR) and D105. Residue S184 coordinates substrate. Y197 serves as the catalytic Proton acceptor. Residues 197-201 (YCASK) and K201 each bind NADP(+).

Belongs to the short-chain dehydrogenases/reductases (SDR) family.

The protein resides in the membrane. The polypeptide is 11-beta-hydroxysteroid dehydrogenase-like 6 (HSD6) (Arabidopsis thaliana (Mouse-ear cress)).